The sequence spans 379 residues: 1-deoxy-D-xylulose 5-phosphate reductoisomerase (379 aa).

NADPH contacts are provided by threonine 10, glycine 11, serine 12, isoleucine 13, asparagine 39, and asparagine 121. Lysine 122 is a binding site for 1-deoxy-D-xylulose 5-phosphate. Glutamate 123 is an NADPH binding site. Aspartate 147 provides a ligand contact to Mn(2+). Residues serine 148, glutamate 149, serine 173, and histidine 196 each contribute to the 1-deoxy-D-xylulose 5-phosphate site. Glutamate 149 contributes to the Mn(2+) binding site. Glycine 202 lines the NADPH pocket. 1-deoxy-D-xylulose 5-phosphate-binding residues include serine 209, asparagine 214, lysine 215, and glutamate 218. Mn(2+) is bound at residue glutamate 218.

The protein belongs to the DXR family. It depends on Mg(2+) as a cofactor. Mn(2+) serves as cofactor.

The enzyme catalyses 2-C-methyl-D-erythritol 4-phosphate + NADP(+) = 1-deoxy-D-xylulose 5-phosphate + NADPH + H(+). The protein operates within isoprenoid biosynthesis; isopentenyl diphosphate biosynthesis via DXP pathway; isopentenyl diphosphate from 1-deoxy-D-xylulose 5-phosphate: step 1/6. Functionally, catalyzes the NADPH-dependent rearrangement and reduction of 1-deoxy-D-xylulose-5-phosphate (DXP) to 2-C-methyl-D-erythritol 4-phosphate (MEP). This chain is 1-deoxy-D-xylulose 5-phosphate reductoisomerase, found in Chlamydia felis (strain Fe/C-56) (Chlamydophila felis).